Consider the following 137-residue polypeptide: Large ribosomal subunit protein uL16 (137 aa).

Belongs to the universal ribosomal protein uL16 family. In terms of assembly, part of the 50S ribosomal subunit.

Binds 23S rRNA and is also seen to make contacts with the A and possibly P site tRNAs. In Afipia carboxidovorans (strain ATCC 49405 / DSM 1227 / KCTC 32145 / OM5) (Oligotropha carboxidovorans), this protein is Large ribosomal subunit protein uL16.